The sequence spans 616 residues: ATP-dependent zinc metalloprotease FtsH 3 (616 aa).

Residues 1 to 9 (MSKNNKKWR) are Cytoplasmic-facing. The chain crosses the membrane as a helical span at residues 10–30 (NAGLYALLLIVVLALASAFFD). The Lumenal portion of the chain corresponds to 31–108 (RPTQTRETLS…VQPQSDEGFW (78 aa)). The chain crosses the membrane as a helical span at residues 109–129 (FRIASTLFLPILLLVGIFFLF). At 130-616 (RRAQSGPGSQ…NNNAKLALLV (487 aa)) the chain is on the cytoplasmic side. 201–208 (GPPGTGKT) is a binding site for ATP. Residue His-423 coordinates Zn(2+). The active site involves Glu-424. 2 residues coordinate Zn(2+): His-427 and Asp-504.

The protein in the central section; belongs to the AAA ATPase family. In the C-terminal section; belongs to the peptidase M41 family. Homohexamer (Potential). Part of a large complex that includes FtsH2 and PSII. Coimmunoprecipitates with YidC. Requires Zn(2+) as cofactor.

It localises to the cellular thylakoid membrane. Its function is as follows. Acts as a processive, ATP-dependent zinc metallopeptidase for both cytoplasmic and membrane proteins. Plays a role in the quality control of integral membrane proteins. The sequence is that of ATP-dependent zinc metalloprotease FtsH 3 from Synechocystis sp. (strain ATCC 27184 / PCC 6803 / Kazusa).